Consider the following 160-residue polypeptide: Protransforming growth factor alpha (160 aa).

An N-terminal signal peptide occupies residues 1–23 (MVPSAGQFALFALGILLAVCQAL). Residues 24-39 (ENSTSALSADPPIAAA) constitute a propeptide, removed in mature form. Topologically, residues 24 to 98 (ENSTSALSAD…AVVAASQKKQ (75 aa)) are extracellular. The N-linked (GlcNAc...) asparagine glycan is linked to Asn25. The EGF-like domain maps to 43–83 (HFNDCPDSHSQFCFHGTCRFLVQEDKPACVCHSGYVGARCE). 3 disulfide bridges follow: Cys47/Cys60, Cys55/Cys71, and Cys73/Cys82. The propeptide at 90-160 (VVAASQKKQA…TACCHSETVV (71 aa)) is removed in mature form. A helical membrane pass occupies residues 99–124 (AITALVVVSIVALAVLIITCVLIHCC). The Cytoplasmic portion of the chain corresponds to 125–160 (QVRKHCEWCRALICRHEKPSALLKGRTACCHSETVV). 2 S-palmitoyl cysteine lipidation sites follow: Cys153 and Cys154.

Interacts with the PDZ domains of MAGI3, SDCBP and SNTA1. The interaction with SDCBP, is required for the targeting to the cell surface. In the endoplasmic reticulum, in its immature form (i.e. with a prosegment and lacking full N-glycosylation), interacts with CNIH. In the Golgi apparatus, may form a complex with CNIH and GORASP2. Interacts (via cytoplasmic C-terminal domain) with NKD2.

The protein localises to the secreted. It is found in the extracellular space. It localises to the cell membrane. Functionally, TGF alpha is a mitogenic polypeptide that is able to bind to the EGF receptor/EGFR and to act synergistically with TGF beta to promote anchorage-independent cell proliferation in soft agar. The chain is Protransforming growth factor alpha (TGFA) from Sus scrofa (Pig).